A 100-amino-acid polypeptide reads, in one-letter code: Urease subunit gamma (100 aa).

This sequence belongs to the urease gamma subunit family. Heterotrimer of UreA (gamma), UreB (beta) and UreC (alpha) subunits. Three heterotrimers associate to form the active enzyme.

The protein resides in the cytoplasm. It carries out the reaction urea + 2 H2O + H(+) = hydrogencarbonate + 2 NH4(+). It participates in nitrogen metabolism; urea degradation; CO(2) and NH(3) from urea (urease route): step 1/1. This chain is Urease subunit gamma, found in Paraburkholderia phymatum (strain DSM 17167 / CIP 108236 / LMG 21445 / STM815) (Burkholderia phymatum).